A 335-amino-acid chain; its full sequence is Phosphate acyltransferase (335 aa).

It belongs to the PlsX family. Homodimer. Probably interacts with PlsY.

The protein localises to the cytoplasm. It catalyses the reaction a fatty acyl-[ACP] + phosphate = an acyl phosphate + holo-[ACP]. It functions in the pathway lipid metabolism; phospholipid metabolism. Catalyzes the reversible formation of acyl-phosphate (acyl-PO(4)) from acyl-[acyl-carrier-protein] (acyl-ACP). This enzyme utilizes acyl-ACP as fatty acyl donor, but not acyl-CoA. The polypeptide is Phosphate acyltransferase (Clostridium botulinum (strain ATCC 19397 / Type A)).